The sequence spans 45 residues: Photosystem II reaction center protein K (45 aa).

Residues 1–8 constitute a propeptide that is removed on maturation; it reads MEAALLLA. Residues 24-44 traverse the membrane as a helical segment; it reads LPIIPLFFLALAFVWQAAVGF.

The protein belongs to the PsbK family. In terms of assembly, PSII is composed of 1 copy each of membrane proteins PsbA, PsbB, PsbC, PsbD, PsbE, PsbF, PsbH, PsbI, PsbJ, PsbK, PsbL, PsbM, PsbT, PsbX, PsbY, PsbZ, Psb30/Ycf12, peripheral proteins PsbO, CyanoQ (PsbQ), PsbU, PsbV and a large number of cofactors. It forms dimeric complexes.

It is found in the cellular thylakoid membrane. One of the components of the core complex of photosystem II (PSII). PSII is a light-driven water:plastoquinone oxidoreductase that uses light energy to abstract electrons from H(2)O, generating O(2) and a proton gradient subsequently used for ATP formation. It consists of a core antenna complex that captures photons, and an electron transfer chain that converts photonic excitation into a charge separation. The polypeptide is Photosystem II reaction center protein K (Rippkaea orientalis (strain PCC 8801 / RF-1) (Cyanothece sp. (strain PCC 8801))).